Here is a 328-residue protein sequence, read N- to C-terminus: Tetraacyldisaccharide 4'-kinase (328 aa).

Position 55-62 (55-62) interacts with ATP; the sequence is TAGGNGKT.

It belongs to the LpxK family.

It carries out the reaction a lipid A disaccharide + ATP = a lipid IVA + ADP + H(+). Its pathway is glycolipid biosynthesis; lipid IV(A) biosynthesis; lipid IV(A) from (3R)-3-hydroxytetradecanoyl-[acyl-carrier-protein] and UDP-N-acetyl-alpha-D-glucosamine: step 6/6. Its function is as follows. Transfers the gamma-phosphate of ATP to the 4'-position of a tetraacyldisaccharide 1-phosphate intermediate (termed DS-1-P) to form tetraacyldisaccharide 1,4'-bis-phosphate (lipid IVA). The protein is Tetraacyldisaccharide 4'-kinase of Escherichia coli O157:H7.